The following is a 141-amino-acid chain: Hemoglobin subunit alpha (141 aa).

The Globin domain maps to 1–141 (VLSPADKTNV…VSTVLTSKYR (141 aa)). Phosphoserine is present on serine 3. Position 7 is an N6-succinyllysine (lysine 7). Residue threonine 8 is modified to Phosphothreonine. Position 11 is an N6-succinyllysine (lysine 11). An N6-acetyllysine; alternate modification is found at lysine 16. Position 16 is an N6-succinyllysine; alternate (lysine 16). Position 24 is a phosphotyrosine (tyrosine 24). Serine 35 bears the Phosphoserine mark. N6-succinyllysine is present on lysine 40. At serine 49 the chain carries Phosphoserine. Histidine 58 provides a ligand contact to O2. Histidine 87 contributes to the heme b binding site. A Phosphoserine modification is found at serine 102. Threonine 108 carries the phosphothreonine modification. Serine 124 carries the phosphoserine modification. 2 positions are modified to phosphothreonine: threonine 134 and threonine 137. Phosphoserine is present on serine 138.

Belongs to the globin family. As to quaternary structure, heterotetramer of two alpha chains and two beta chains. In terms of tissue distribution, red blood cells.

Involved in oxygen transport from the lung to the various peripheral tissues. The chain is Hemoglobin subunit alpha from Tamias merriami (Merriam's chipmunk).